A 348-amino-acid polypeptide reads, in one-letter code: S-adenosylmethionine:tRNA ribosyltransferase-isomerase (348 aa).

The protein belongs to the QueA family. As to quaternary structure, monomer.

The protein localises to the cytoplasm. It carries out the reaction 7-aminomethyl-7-carbaguanosine(34) in tRNA + S-adenosyl-L-methionine = epoxyqueuosine(34) in tRNA + adenine + L-methionine + 2 H(+). It participates in tRNA modification; tRNA-queuosine biosynthesis. Functionally, transfers and isomerizes the ribose moiety from AdoMet to the 7-aminomethyl group of 7-deazaguanine (preQ1-tRNA) to give epoxyqueuosine (oQ-tRNA). In Cytophaga hutchinsonii (strain ATCC 33406 / DSM 1761 / CIP 103989 / NBRC 15051 / NCIMB 9469 / D465), this protein is S-adenosylmethionine:tRNA ribosyltransferase-isomerase.